A 364-amino-acid chain; its full sequence is Aminomethyltransferase (364 aa).

Belongs to the GcvT family. The glycine cleavage system is composed of four proteins: P, T, L and H.

It carries out the reaction N(6)-[(R)-S(8)-aminomethyldihydrolipoyl]-L-lysyl-[protein] + (6S)-5,6,7,8-tetrahydrofolate = N(6)-[(R)-dihydrolipoyl]-L-lysyl-[protein] + (6R)-5,10-methylene-5,6,7,8-tetrahydrofolate + NH4(+). Functionally, the glycine cleavage system catalyzes the degradation of glycine. This is Aminomethyltransferase from Shigella flexneri serotype 5b (strain 8401).